Consider the following 467-residue polypeptide: Sexual differentiation process putative subtilase-type proteinase isp6 (467 aa).

The Inhibitor I9 domain maps to tyrosine 86–isoleucine 176. Residues proline 186–glutamate 467 enclose the Peptidase S8 domain. Catalysis depends on charge relay system residues aspartate 221, histidine 253, and serine 409.

The protein belongs to the peptidase S8 family.

The protein is Sexual differentiation process putative subtilase-type proteinase isp6 (isp6) of Schizosaccharomyces pombe (strain 972 / ATCC 24843) (Fission yeast).